A 347-amino-acid chain; its full sequence is Quinolinate synthase (347 aa).

His-47 and Ser-68 together coordinate iminosuccinate. Cys-113 is a binding site for [4Fe-4S] cluster. Iminosuccinate-binding positions include 139-141 (YAN) and Ser-156. Cys-200 provides a ligand contact to [4Fe-4S] cluster. Iminosuccinate contacts are provided by residues 226–228 (HPE) and Thr-243. Cys-297 serves as a coordination point for [4Fe-4S] cluster.

Belongs to the quinolinate synthase family. Type 1 subfamily. It depends on [4Fe-4S] cluster as a cofactor.

Its subcellular location is the cytoplasm. The catalysed reaction is iminosuccinate + dihydroxyacetone phosphate = quinolinate + phosphate + 2 H2O + H(+). The protein operates within cofactor biosynthesis; NAD(+) biosynthesis; quinolinate from iminoaspartate: step 1/1. Functionally, catalyzes the condensation of iminoaspartate with dihydroxyacetone phosphate to form quinolinate. The chain is Quinolinate synthase from Shigella flexneri.